A 267-amino-acid chain; its full sequence is uncharacterized protein (267 aa).

The chain crosses the membrane as a helical span at residues 30-52; that stretch reads FMRIFLLFLFFVLFTFGVEGYVI.

The protein resides in the membrane. This is an uncharacterized protein from Aquifex aeolicus (strain VF5).